The following is a 126-amino-acid chain: Lymphocyte antigen 6 complex locus protein G6c (126 aa).

A signal peptide spans 1-19 (MKHLLLLTLSALLYCWVSA). The UPAR/Ly6 domain occupies 21-112 (TRCHSCYKVP…PRPTPALALI (92 aa)). 3 cysteine pairs are disulfide-bonded: cysteine 23/cysteine 48, cysteine 26/cysteine 34, and cysteine 40/cysteine 66. Asparagine 89 carries an N-linked (GlcNAc...) (high mannose) asparagine glycan. Cysteine 93 and cysteine 98 are disulfide-bonded. The GPI-anchor amidated serine moiety is linked to residue serine 100. Residues 101 to 126 (PAPRPTPALALISLTSLAGLGLWLLH) constitute a propeptide, removed in mature form.

As to quaternary structure, monomer. N-glycosylated. In terms of tissue distribution, highly expressed at the leading edges of cells, on filopodia.

It is found in the cell membrane. In Mus musculus (Mouse), this protein is Lymphocyte antigen 6 complex locus protein G6c (Ly6g6c).